A 132-amino-acid chain; its full sequence is MECVKQLCRNHLRLDNLTDPVRSVLTKGTTAEKVQLAACCLGVVCSIICLALGIAAAAVGVSCGGFALGLGIIAILLGIVLFATSALDVLENHGLVGCPFKLPCKSSPANEPAVQFFKGKNGSADQVILVTQ.

2 consecutive transmembrane segments (helical) span residues 41 to 61 (LGVVCSIICLALGIAAAAVGV) and 66 to 86 (FALGLGIIAILLGIVLFATSA).

It localises to the secreted. Its subcellular location is the host vacuole. It is found in the host pathogen-containing vacuole. The protein localises to the host pathogen-containing vacuole membrane. Its function is as follows. Inclusion membrane protein probably involved in early modification events of the chlamydial inclusion. The polypeptide is Inclusion membrane protein E (Chlamydia trachomatis serovar L2 (strain ATCC VR-902B / DSM 19102 / 434/Bu)).